A 265-amino-acid chain; its full sequence is Putative carbamate hydrolase RutD (265 aa).

The region spanning 21-123 is the AB hydrolase-1 domain; sequence PILLSAGMGG…TIVNGWARAD (103 aa).

The protein belongs to the AB hydrolase superfamily. Hydrolase RutD family.

It catalyses the reaction carbamate + 2 H(+) = NH4(+) + CO2. Its function is as follows. Involved in pyrimidine catabolism. May facilitate the hydrolysis of carbamate, a reaction that can also occur spontaneously. This chain is Putative carbamate hydrolase RutD, found in Azorhizobium caulinodans (strain ATCC 43989 / DSM 5975 / JCM 20966 / LMG 6465 / NBRC 14845 / NCIMB 13405 / ORS 571).